A 567-amino-acid chain; its full sequence is MSFKFNEESFLDNSFNETLREKLTKMLNSRKSMDIKIDDHLSYANNRGSTSCSNNFDNSSSIKARDSKLDILKSDVKVCEVNFPTIPNLEILDLDVSGQPRALAKGICKISCRDALLQIQTEIEANSLLLYTNISPDFTTPLMIANDTFTIPITMTFSQIQLEAITNVFVKNSGVGISFNDVSLDFQFDCSIKLLQPHIAKRLRKSMQLVFKDVLPSALFNMSRSWFTHDGSSSQTTTDHSQEEGSRLIRLHRLTVEDLDLQDLSPVNMLKLSTLTSSRQTLSLHSTMPKYFSTIPGCLDRQNFRNFTSRMPCLSNYGGGSDDGDKHVPHIHNLQNKNLLPEEALEENDIDLKAILSIQTKIYERGISTNNDVIRPRRRKIRIKRAKKSIVNKATETSSNLNADSEITPVSSSHNATSSVNTITSLTTSSLGSTAGSSNSKNTNRSSSFTSSIMPITPLAQSSMNKKDGNLITLRQDSKVLDSMKYFTKIQDLHNIHASFNSSRETQDSNNRFRIASEMLPTKREISPIPTLNSFIEPNRRFSFVGLNHKTSHDNSWSVDEQPPPYY.

In terms of domain architecture, SMP-LTD spans Met-1–Arg-224. Residues Asn-392–Ala-416 are compositionally biased toward polar residues. The interval Asn-392–Ile-453 is disordered. Residues Thr-417–Ser-452 show a composition bias toward low complexity.

Belongs to the MDM34 family. Component of the ER-mitochondria encounter structure (ERMES) or MDM complex, composed of MMM1, MDM10, MDM12 and MDM34.

The protein localises to the mitochondrion outer membrane. Its function is as follows. Component of the ERMES/MDM complex, which serves as a molecular tether to connect the endoplasmic reticulum (ER) and mitochondria. Components of this complex are involved in the control of mitochondrial shape and protein biogenesis, and function in nonvesicular lipid trafficking between the ER and mitochondria. MDM34 is required for the interaction of the ER-resident membrane protein MMM1 and the outer mitochondrial membrane-resident beta-barrel protein MDM10. The protein is Mitochondrial distribution and morphology protein 34 of Vanderwaltozyma polyspora (strain ATCC 22028 / DSM 70294 / BCRC 21397 / CBS 2163 / NBRC 10782 / NRRL Y-8283 / UCD 57-17) (Kluyveromyces polysporus).